Consider the following 88-residue polypeptide: Sec-independent protein translocase protein TatA (88 aa).

Residues 3–23 (IFGVGLPEVTVILILALLIFG) traverse the membrane as a helical segment. A disordered region spans residues 56–88 (MNEQDKDESPISIESNQTNEINQEKIDSENSKK). The segment covering 67–76 (SIESNQTNEI) has biased composition (polar residues). The segment covering 77-88 (NQEKIDSENSKK) has biased composition (basic and acidic residues).

Belongs to the TatA/E family. As to quaternary structure, forms a complex with TatC.

It is found in the cell inner membrane. Its function is as follows. Part of the twin-arginine translocation (Tat) system that transports large folded proteins containing a characteristic twin-arginine motif in their signal peptide across membranes. TatA could form the protein-conducting channel of the Tat system. The sequence is that of Sec-independent protein translocase protein TatA from Prochlorococcus marinus (strain AS9601).